The following is a 188-amino-acid chain: MLSKIRPKVKQPLERIGKTLASLGITPNQLTIIGFLITLLASYEFYLQNQILAGIILAVGAFLDALDGALARATGKVSKFGGFLDSTIDRLSDASILFGIALGGLVRWDVTFLTLIGSYMVSYSRCRAELAGSGTLAIGIAERGERIIIIFIASLFNAVKIGVYLVAILSWITFIQRVYEAKKRLEMG.

2 consecutive transmembrane segments (helical) span residues 20-40 (LASL…ITLL) and 51-71 (ILAG…GALA). Mg(2+) contacts are provided by Asp64, Asp67, Asp85, and Asp89. The Proton acceptor role is filled by Asp89. The next 2 membrane-spanning stretches (helical) occupy residues 96-116 (ILFG…LTLI) and 147-167 (IIII…YLVA).

Belongs to the CDP-alcohol phosphatidyltransferase class-I family. Mn(2+) is required as a cofactor. The cofactor is Mg(2+).

It localises to the cell membrane. The enzyme catalyses CDP-2,3-bis-O-(phytanyl)-sn-glycerol + 1D-myo-inositol 3-phosphate = saturated 1-archaetidyl-1D-myo-inositol 3-phosphate + CMP + H(+). It functions in the pathway lipid metabolism; phospholipid metabolism. Its function is as follows. Catalyzes the formation of archaetidylinositol phosphate (AIP) from CDP-archaeol (CDP-ArOH or CDP-2,3-bis-(O-phytanyl)-sn-glycerol) and 1L-myo-inositol 1-phosphate (IP or 1D-myo-inositol 3-phosphate). AIP is a precursor of archaetidyl-myo-inositol (AI), an ether-type inositol phospholipid ubiquitously distributed in archaea membranes and essential for glycolipid biosynthesis in archaea. This chain is Archaetidylinositol phosphate synthase, found in Pyrococcus horikoshii (strain ATCC 700860 / DSM 12428 / JCM 9974 / NBRC 100139 / OT-3).